A 453-amino-acid chain; its full sequence is Dibenzothiophene-sulfone monooxygenase (453 aa).

Residues aspartate 59, threonine 106, histidine 156, tyrosine 160, and serine 231 each coordinate FMN.

This sequence belongs to the NtaA/SnaA/DszA monooxygenase family. Homodimer.

Its subcellular location is the cytoplasm. The catalysed reaction is dibenzothiophene 5,5-dioxide + FMNH2 + NADH + O2 = 2'-hydroxybiphenyl-2-sulfinate + FMN + NAD(+) + H2O + H(+). Its pathway is sulfur metabolism; dibenzothiophene degradation. Functionally, catalyzes the second step of the '4S' desulfurization pathway that removes covalently bound sulfur from dibenzothiophene (DBT) without breaking carbon-carbon bonds. Metabolizes DBT-sulfone (DBTO2 or DBT 5,5-dioxide) to 2-(2'-hydroxyphenyl)benzene sulphinate (HBPS). This is Dibenzothiophene-sulfone monooxygenase from Rhodococcus erythropolis (strain XP).